Here is a 118-residue protein sequence, read N- to C-terminus: Large ribosomal subunit protein bL20 (118 aa).

The protein belongs to the bacterial ribosomal protein bL20 family.

Its function is as follows. Binds directly to 23S ribosomal RNA and is necessary for the in vitro assembly process of the 50S ribosomal subunit. It is not involved in the protein synthesizing functions of that subunit. In Shigella flexneri serotype 5b (strain 8401), this protein is Large ribosomal subunit protein bL20.